The chain runs to 436 residues: T-box transcription factor TBX6 (436 aa).

The segment at residues 100-273 (LWKEFSAVGT…ANPFAKGFRE (174 aa)) is a DNA-binding region (T-box). A compositionally biased stretch (basic and acidic residues) spans 274–284 (NGRNCKRERDA). Disordered regions lie at residues 274 to 344 (NGRN…CGGP) and 360 to 383 (PSHLPARTPSFAEAPDPGRPAPYS). The span at 332–344 (EAASASAPPCGGP) shows a compositional bias: low complexity.

It localises to the nucleus. Functionally, T-box transcription factor that plays an essential role in the determination of the fate of axial stem cells: neural vs mesodermal. Acts in part by down-regulating, a specific enhancer (N1) of SOX2, to inhibit neural development. Seems to play also an essential role in left/right axis determination and acts through effects on Notch signaling around the node as well as through an effect on the morphology and motility of the nodal cilia. This Mus musculus (Mouse) protein is T-box transcription factor TBX6 (Tbx6).